Reading from the N-terminus, the 168-residue chain is Phosphopantetheine adenylyltransferase (168 aa).

Thr10 contributes to the substrate binding site. ATP-binding positions include 10–11 and His18; that span reads TF. 3 residues coordinate substrate: Lys42, Leu75, and Arg89. ATP is bound by residues 90–92, Glu100, and 125–131; these read GVR and YTYVASS.

It belongs to the bacterial CoaD family. As to quaternary structure, homohexamer. Mg(2+) is required as a cofactor.

It is found in the cytoplasm. It catalyses the reaction (R)-4'-phosphopantetheine + ATP + H(+) = 3'-dephospho-CoA + diphosphate. Its pathway is cofactor biosynthesis; coenzyme A biosynthesis; CoA from (R)-pantothenate: step 4/5. Functionally, reversibly transfers an adenylyl group from ATP to 4'-phosphopantetheine, yielding dephospho-CoA (dPCoA) and pyrophosphate. This is Phosphopantetheine adenylyltransferase from Prosthecochloris aestuarii (strain DSM 271 / SK 413).